Reading from the N-terminus, the 446-residue chain is NADH oxidase (446 aa).

FAD is bound by residues 7–11 (GCTHA), Glu32, Cys42, Val79, 110–113 (TTGS), Lys132, and Tyr157. His10 (proton acceptor) is an active-site residue. Residue Cys42 is the Redox-active of the active site. Cys42 is subject to Cysteine sulfinic acid (-SO2H). Residues 150–165 (VVVVGGGYIGIELVEA), Asp177, Tyr186, and Gly243 contribute to the NAD(+) site. FAD is bound by residues 271–281 (TSNPDIFAAGD), Leu298, Ala299, and Thr300. Gly328 serves as a coordination point for NAD(+). Phe424 serves as a coordination point for FAD.

This sequence belongs to the class-III pyridine nucleotide-disulfide oxidoreductase family. Homodimer. FAD serves as cofactor. Post-translationally, the N-terminus is blocked.

The catalysed reaction is 2 NADH + O2 + 2 H(+) = 2 NAD(+) + 2 H2O. In terms of biological role, catalyzes the four-electron reduction of molecular oxygen to water. This is NADH oxidase (nox) from Enterococcus faecalis (strain ATCC 700802 / V583).